We begin with the raw amino-acid sequence, 127 residues long: Major sperm protein 33 (127 aa).

Alanine 2 is modified (N-acetylalanine). The MSP domain occupies 9–126 (DIQTQPGTKI…RRKNLPIEYN (118 aa)).

Sperm.

The protein localises to the cell projection. The protein resides in the pseudopodium. It localises to the cytoplasm. It is found in the cytoskeleton. Its function is as follows. Central component in molecular interactions underlying sperm crawling. Forms an extensive filament system that extends from sperm villipoda, along the leading edge of the pseudopod. The polypeptide is Major sperm protein 33 (msp-33) (Caenorhabditis elegans).